The primary structure comprises 222 residues: UPF0758 protein HSM_0009 (222 aa).

Positions 99 to 222 (QEFTSPDTVR…YFSFAEQGWI (124 aa)) constitute an MPN domain. 3 residues coordinate Zn(2+): histidine 171, histidine 173, and aspartate 184. A JAMM motif motif is present at residues 171-184 (HNHPSGVSTPSMAD).

It belongs to the UPF0758 family.

This is UPF0758 protein HSM_0009 from Histophilus somni (strain 2336) (Haemophilus somnus).